Consider the following 503-residue polypeptide: Variant surface glycoprotein AnTaT 1.1 (503 aa).

Positions 1–29 (MVTKERNAALKIVMLVASALTLHPQQALA) are cleaved as a signal peptide. 2 disulfide bridges follow: C45/C172 and C154/C209. N-linked (GlcNAc...) asparagine glycosylation occurs at N113. N419 and N432 each carry an N-linked (GlcNAc...) asparagine glycan. Residue D480 is the site of GPI-anchor amidated aspartate attachment. The propeptide at 481 to 503 (SSILLTKNFALSVVSAALVALLF) is removed in mature form.

It is found in the cell membrane. In terms of biological role, VSG forms a coat on the surface of the parasite. The trypanosome evades the immune response of the host by expressing a series of antigenically distinct VSGs from an estimated 1000 VSG genes. This Trypanosoma brucei brucei protein is Variant surface glycoprotein AnTaT 1.1.